Here is a 1067-residue protein sequence, read N- to C-terminus: Carbamoyl phosphate synthase large chain (1067 aa).

The carboxyphosphate synthetic domain stretch occupies residues 1–401 (MPLNKDIKKV…AFLKGIRSLE (401 aa)). ATP is bound by residues R129, R169, G175, G176, K208, V210, E215, G241, I242, H243, Q284, and E298. One can recognise an ATP-grasp 1 domain in the interval 133–327 (RDMMNRINQP…IAKVAAKIAL (195 aa)). Residues Q284, E298, and N300 each contribute to the Mg(2+) site. Positions 284, 298, and 300 each coordinate Mn(2+). An oligomerization domain region spans residues 402 to 549 (IGKYSLEHKK…YSTYEQYDEV (148 aa)). Residues 550 to 932 (VVSDNKKVVV…ALYKGFVGAS (383 aa)) form a carbamoyl phosphate synthetic domain region. In terms of domain architecture, ATP-grasp 2 spans 674-864 (DDLLERLNIA…IVDIATRIML (191 aa)). The ATP site is built by R710, K749, L751, E755, G780, V781, H782, S783, Q823, and E835. Mg(2+) contacts are provided by Q823, E835, and N837. Q823, E835, and N837 together coordinate Mn(2+). An MGS-like domain is found at 933-1067 (MYTGDKGKTI…NRELEVFNLI (135 aa)). The segment at 933-1067 (MYTGDKGKTI…NRELEVFNLI (135 aa)) is allosteric domain.

The protein belongs to the CarB family. As to quaternary structure, composed of two chains; the small (or glutamine) chain promotes the hydrolysis of glutamine to ammonia, which is used by the large (or ammonia) chain to synthesize carbamoyl phosphate. Tetramer of heterodimers (alpha,beta)4. The cofactor is Mg(2+). Requires Mn(2+) as cofactor.

The catalysed reaction is hydrogencarbonate + L-glutamine + 2 ATP + H2O = carbamoyl phosphate + L-glutamate + 2 ADP + phosphate + 2 H(+). It catalyses the reaction hydrogencarbonate + NH4(+) + 2 ATP = carbamoyl phosphate + 2 ADP + phosphate + 2 H(+). The protein operates within amino-acid biosynthesis; L-arginine biosynthesis; carbamoyl phosphate from bicarbonate: step 1/1. It functions in the pathway pyrimidine metabolism; UMP biosynthesis via de novo pathway; (S)-dihydroorotate from bicarbonate: step 1/3. Its function is as follows. Large subunit of the glutamine-dependent carbamoyl phosphate synthetase (CPSase). CPSase catalyzes the formation of carbamoyl phosphate from the ammonia moiety of glutamine, carbonate, and phosphate donated by ATP, constituting the first step of 2 biosynthetic pathways, one leading to arginine and/or urea and the other to pyrimidine nucleotides. The large subunit (synthetase) binds the substrates ammonia (free or transferred from glutamine from the small subunit), hydrogencarbonate and ATP and carries out an ATP-coupled ligase reaction, activating hydrogencarbonate by forming carboxy phosphate which reacts with ammonia to form carbamoyl phosphate. This chain is Carbamoyl phosphate synthase large chain, found in Clostridium perfringens (strain 13 / Type A).